A 210-amino-acid chain; its full sequence is Prolactin (210 aa).

An N-terminal signal peptide occupies residues methionine 1–alanine 23. 2 disulfides stabilise this stretch: cysteine 69–cysteine 183 and cysteine 200–cysteine 210.

The protein belongs to the somatotropin/prolactin family.

Its subcellular location is the secreted. In Oncorhynchus mykiss (Rainbow trout), this protein is Prolactin (prl).